We begin with the raw amino-acid sequence, 307 residues long: Branched-chain-amino-acid aminotransferase (307 aa).

Residue Lys-160 is modified to N6-(pyridoxal phosphate)lysine.

Belongs to the class-IV pyridoxal-phosphate-dependent aminotransferase family. Requires pyridoxal 5'-phosphate as cofactor.

It carries out the reaction L-leucine + 2-oxoglutarate = 4-methyl-2-oxopentanoate + L-glutamate. It catalyses the reaction L-isoleucine + 2-oxoglutarate = (S)-3-methyl-2-oxopentanoate + L-glutamate. The enzyme catalyses L-valine + 2-oxoglutarate = 3-methyl-2-oxobutanoate + L-glutamate. The protein operates within amino-acid biosynthesis; L-isoleucine biosynthesis; L-isoleucine from 2-oxobutanoate: step 4/4. It functions in the pathway amino-acid biosynthesis; L-leucine biosynthesis; L-leucine from 3-methyl-2-oxobutanoate: step 4/4. Its pathway is amino-acid biosynthesis; L-valine biosynthesis; L-valine from pyruvate: step 4/4. Functionally, acts on leucine, isoleucine and valine. This is Branched-chain-amino-acid aminotransferase (ilvE) from Pseudomonas aeruginosa (strain ATCC 15692 / DSM 22644 / CIP 104116 / JCM 14847 / LMG 12228 / 1C / PRS 101 / PAO1).